The chain runs to 223 residues: MIF4G domain-containing protein B (223 aa).

An MIF4G domain is found at 9–206; sequence DYKIQGFDAD…LEMIEYRAAG (198 aa).

The protein belongs to the MIF4GD family. As to quaternary structure, interacts with eif4g1, eif4g2 and slbp; probably tethered by SLBP to the 3'-end of mRNAs ending with the histone stem-loop, it also interacts with eif4g1 which is bound to their 5'-end.

It is found in the cytoplasm. It localises to the nucleus. Its function is as follows. Functions in replication-dependent translation of histone mRNAs which differ from other eukaryotic mRNAs in that they do not end with a poly-A tail but a stem-loop. May participate in circularizing those mRNAs specifically enhancing their translation. The sequence is that of MIF4G domain-containing protein B (mif4gd-b) from Xenopus laevis (African clawed frog).